Consider the following 411-residue polypeptide: Lissencephaly-1 homolog (411 aa).

A LisH domain is found at 9–41; the sequence is QREELNQAIADYLGSNGYADSLETFRKEADLST. Residues 56-83 adopt a coiled-coil conformation; it reads TSVIRLQKKVMDLEAKLTEAEKEVIEGA. WD repeat units follow at residues 106 to 147, 148 to 187, 191 to 230, 233 to 272, 275 to 334, 337 to 376, and 379 to 411; these read GHRA…RSLK, GHTD…ECVK, GHDH…CVKT, GHRE…CKVE, DHEH…CLLT, GHDN…CMKT, and AHQH…WECR.

This sequence belongs to the WD repeat LIS1/nudF family.

Its subcellular location is the cytoplasm. It localises to the cytoskeleton. The protein localises to the microtubule organizing center. The protein resides in the centrosome. Its function is as follows. Positively regulates the activity of the minus-end directed microtubule motor protein dynein. May enhance dynein-mediated microtubule sliding by targeting dynein to the microtubule plus end. Required for several dynein- and microtubule-dependent processes. The protein is Lissencephaly-1 homolog of Drosophila mojavensis (Fruit fly).